The chain runs to 151 residues: High mobility group B protein 14 (151 aa).

Disordered stretches follow at residues 1–62 (MTKR…QTKM) and 132–151 (TKRMESGAHDESETDSDYSE). Over residues 7–20 (KSGPLSPSCSGGSS) the composition is skewed to low complexity. Over residues 35–56 (RSTRLRLQPLRKPKTSPKKKPV) the composition is skewed to basic residues. A DNA-binding region (HMG box) is located at residues 63–132 (PKKPATAFFF…EFHRAMTEYT (70 aa)). Residues 132–142 (TKRMESGAHDE) are compositionally biased toward basic and acidic residues. The residue at position 150 (Ser150) is a Phosphoserine.

It belongs to the HMGB family.

Its subcellular location is the nucleus. The chain is High mobility group B protein 14 (HMGB14) from Arabidopsis thaliana (Mouse-ear cress).